The sequence spans 228 residues: Cytidylate kinase (228 aa).

12–20 (GPSGSGKGT) lines the ATP pocket.

This sequence belongs to the cytidylate kinase family. Type 1 subfamily.

It is found in the cytoplasm. It carries out the reaction CMP + ATP = CDP + ADP. The enzyme catalyses dCMP + ATP = dCDP + ADP. This is Cytidylate kinase from Pseudomonas putida (strain W619).